The following is a 541-amino-acid chain: Arginine--tRNA ligase (541 aa).

Residues A119–H129 carry the 'HIGH' region motif.

It belongs to the class-I aminoacyl-tRNA synthetase family. Monomer.

The protein resides in the cytoplasm. It carries out the reaction tRNA(Arg) + L-arginine + ATP = L-arginyl-tRNA(Arg) + AMP + diphosphate. This Helicobacter pylori (strain J99 / ATCC 700824) (Campylobacter pylori J99) protein is Arginine--tRNA ligase (argS).